A 415-amino-acid polypeptide reads, in one-letter code: MALNIPFRNAYYRFASSYSFLFFISWSLWWSLYAIWLKGHLGLTGTELGTLYSVNQFTSILFMMFYGIVQDKLGLKKPLIWCMSFILVLTGPFMIYVYEPLLQSNFSVGLILGALFFGLGYLAGCGLLDSFTEKMARNFHFEYGTARAWGSFGYAIGAFFAGIFFSISPHINFWLVSLFGAVFMMINMRFKDKDHQCIAADAGGVKKEDFIAVFKDRNFWVFVIFIVGTWSFYNIFDQQLFPVFYAGLFESHDVGTRLYGYLNSFQVVLEALCMAIIPFFVNRVGPKNALLIGVVIMALRILSCALFVNPWIISLVKLLHAIEVPLCVISVFKYSVANFDKRLSSTIFLIGFQIASSLGIVLLSTPTGILFDHAGYQTVFFAISGIVCLMLLFGIFFLSKKREQIVMETPVPSAI.

Residues 1–16 lie on the Cytoplasmic side of the membrane; it reads MALNIPFRNAYYRFAS. The helical transmembrane segment at 17 to 37 threads the bilayer; the sequence is SYSFLFFISWSLWWSLYAIWL. Residues 38–48 are Periplasmic-facing; it reads KGHLGLTGTEL. Residues 49 to 69 form a helical membrane-spanning segment; that stretch reads GTLYSVNQFTSILFMMFYGIV. Residues 70–77 lie on the Cytoplasmic side of the membrane; sequence QDKLGLKK. The helical transmembrane segment at 78–98 threads the bilayer; it reads PLIWCMSFILVLTGPFMIYVY. The Periplasmic segment spans residues 99–107; that stretch reads EPLLQSNFS. Residues 108 to 128 form a helical membrane-spanning segment; that stretch reads VGLILGALFFGLGYLAGCGLL. Over 129–147 the chain is Cytoplasmic; sequence DSFTEKMARNFHFEYGTAR. Residues 148–167 form a helical membrane-spanning segment; it reads AWGSFGYAIGAFFAGIFFSI. Over 168–170 the chain is Periplasmic; that stretch reads SPH. A helical transmembrane segment spans residues 171 to 190; the sequence is INFWLVSLFGAVFMMINMRF. Residues 191–220 lie on the Cytoplasmic side of the membrane; the sequence is KDKDHQCIAADAGGVKKEDFIAVFKDRNFW. Residues 221-241 form a helical membrane-spanning segment; that stretch reads VFVIFIVGTWSFYNIFDQQLF. Residues 242–260 are Periplasmic-facing; it reads PVFYAGLFESHDVGTRLYG. A helical membrane pass occupies residues 261–281; the sequence is YLNSFQVVLEALCMAIIPFFV. The Cytoplasmic segment spans residues 282–287; that stretch reads NRVGPK. The helical transmembrane segment at 288–308 threads the bilayer; that stretch reads NALLIGVVIMALRILSCALFV. Residues 309-311 are Periplasmic-facing; sequence NPW. A helical transmembrane segment spans residues 312 to 332; the sequence is IISLVKLLHAIEVPLCVISVF. Over 333–342 the chain is Cytoplasmic; that stretch reads KYSVANFDKR. The chain crosses the membrane as a helical span at residues 343–363; it reads LSSTIFLIGFQIASSLGIVLL. Topologically, residues 364-377 are periplasmic; the sequence is STPTGILFDHAGYQ. A helical membrane pass occupies residues 378–398; that stretch reads TVFFAISGIVCLMLLFGIFFL. At 399–415 the chain is on the cytoplasmic side; sequence SKKREQIVMETPVPSAI.

Belongs to the major facilitator superfamily. Oligosaccharide:H(+) symporter (OHS) (TC 2.A.1.5) family.

It localises to the cell inner membrane. It participates in glycan biosynthesis; sucrose metabolism. Functionally, responsible for transport of sucrose into the cell, with the concomitant import of a proton (symport system). Can also transport maltose, fructose or lactulose, but not glucose, lactose or melibiose. The substrate specificity is directed toward the fructofuranosyl moiety of the substrate. The protein is Sucrose permease of Escherichia coli.